The sequence spans 426 residues: Probable imidazolonepropionase (426 aa).

4-imidazolone-5-propanoate-binding residues include tyrosine 159 and histidine 192. An N-formimidoyl-L-glutamate-binding site is contributed by tyrosine 159. Fe(3+) is bound at residue histidine 260. Histidine 260 lines the Zn(2+) pocket. Glutamate 263 lines the 4-imidazolone-5-propanoate pocket. Fe(3+) is bound at residue aspartate 334. Zn(2+) is bound at residue aspartate 334. An N-formimidoyl-L-glutamate-binding site is contributed by asparagine 336.

Belongs to the metallo-dependent hydrolases superfamily. HutI family. Zn(2+) is required as a cofactor. The cofactor is Fe(3+).

The enzyme catalyses 4-imidazolone-5-propanoate + H2O = N-formimidoyl-L-glutamate. It participates in amino-acid degradation; L-histidine degradation into L-glutamate; N-formimidoyl-L-glutamate from L-histidine: step 3/3. This chain is Probable imidazolonepropionase (AMDHD1), found in Bos taurus (Bovine).